The primary structure comprises 70 residues: Large ribosomal subunit protein eL38 (70 aa).

This sequence belongs to the eukaryotic ribosomal protein eL38 family.

The protein is Large ribosomal subunit protein eL38 (RpL38) of Plutella xylostella (Diamondback moth).